The following is a 272-amino-acid chain: NADH-dependent L-xylulose reductase (272 aa).

Residues leucine 24 and aspartate 78 each coordinate NADP(+). Residue serine 160 is the Proton donor of the active site. Residues tyrosine 175, lysine 179, and isoleucine 208 each coordinate NADP(+). Tyrosine 175 (proton acceptor) is an active-site residue. Lysine 179 functions as the Lowers pKa of active site Tyr in the catalytic mechanism.

This sequence belongs to the short-chain dehydrogenases/reductases (SDR) family.

The catalysed reaction is xylitol + NAD(+) = L-xylulose + NADH + H(+). The enzyme catalyses D-arabinitol + NAD(+) = D-ribulose + NADH + H(+). Its function is as follows. NADH-dependent L-xylulose reductase; part of the yeast pathway for L-arabinose catabolism. Reversibly converts L-xylulose to xylitol and D-ribulose to D-arabinitol. It has a much lower activity with D-xylulose. Sugar alcohols can serve as a substrate when the hydroxyl group of C-2 is in the L- and the hydroxyl group of the C-3 is in the D-configuration. Also seems to be specific for sugar alcohols that have not more than 5 carbons since no activity is observed with dulcitol (galactitol), which has the hydroxyl group of C-2 in L- and of C-3 in D-configuration, but is a six-carbon sugar alcohol. The protein is NADH-dependent L-xylulose reductase of Ambrosiozyma monospora (Yeast).